We begin with the raw amino-acid sequence, 159 residues long: Ribosomal RNA large subunit methyltransferase H (159 aa).

Residues Leu-76, Gly-108, and 127-132 (FGLLTL) contribute to the S-adenosyl-L-methionine site.

The protein belongs to the RNA methyltransferase RlmH family. As to quaternary structure, homodimer.

It is found in the cytoplasm. It carries out the reaction pseudouridine(1915) in 23S rRNA + S-adenosyl-L-methionine = N(3)-methylpseudouridine(1915) in 23S rRNA + S-adenosyl-L-homocysteine + H(+). Functionally, specifically methylates the pseudouridine at position 1915 (m3Psi1915) in 23S rRNA. The polypeptide is Ribosomal RNA large subunit methyltransferase H (Streptococcus equi subsp. zooepidemicus (strain H70)).